Consider the following 440-residue polypeptide: 3-phosphoshikimate 1-carboxyvinyltransferase (440 aa).

3-phosphoshikimate contacts are provided by Lys19, Ser20, and Arg24. Lys19 provides a ligand contact to phosphoenolpyruvate. Phosphoenolpyruvate-binding residues include Gly92 and Arg121. Residues Ser166, Gln168, Asp315, and Lys342 each coordinate 3-phosphoshikimate. Gln168 provides a ligand contact to phosphoenolpyruvate. Asp315 acts as the Proton acceptor in catalysis. Residues Arg346 and Arg399 each contribute to the phosphoenolpyruvate site.

This sequence belongs to the EPSP synthase family. As to quaternary structure, monomer.

The protein localises to the cytoplasm. It catalyses the reaction 3-phosphoshikimate + phosphoenolpyruvate = 5-O-(1-carboxyvinyl)-3-phosphoshikimate + phosphate. It participates in metabolic intermediate biosynthesis; chorismate biosynthesis; chorismate from D-erythrose 4-phosphate and phosphoenolpyruvate: step 6/7. Its function is as follows. Catalyzes the transfer of the enolpyruvyl moiety of phosphoenolpyruvate (PEP) to the 5-hydroxyl of shikimate-3-phosphate (S3P) to produce enolpyruvyl shikimate-3-phosphate and inorganic phosphate. This chain is 3-phosphoshikimate 1-carboxyvinyltransferase, found in Leptospira borgpetersenii serovar Hardjo-bovis (strain JB197).